The sequence spans 339 residues: Transcription initiation factor IIB (339 aa).

The segment at 39 to 70 (EELICPVCGSKNIIKDYERAEIVCEMCGCVLQ) adopts a TFIIB-type zinc-finger fold. Zn(2+)-binding residues include Cys-43, Cys-46, Cys-62, and Cys-65. 2 tandem repeats follow at residues 156 to 239 (SELD…SREL) and 250 to 331 (DYVP…ELTE).

Belongs to the TFIIB family.

Functionally, stabilizes TBP binding to an archaeal box-A promoter. Also responsible for recruiting RNA polymerase II to the pre-initiation complex (DNA-TBP-TFIIB). This is Transcription initiation factor IIB from Methanococcus maripaludis (strain C7 / ATCC BAA-1331).